Reading from the N-terminus, the 1135-residue chain is Exportin-5 (1135 aa).

Residues 32–117 enclose the Importin N-terminal domain; it reads SQVFLEEIKT…KEKLVTILVD (86 aa). The tract at residues 630-631 is pre-siRNA binding; that stretch reads TE.

Belongs to the exportin family. Found in a nuclear export complex with RanGTP, exportin and pre-miRNA.

Its subcellular location is the nucleus. The protein resides in the cytoplasm. Mediates the nuclear export of proteins bearing a double-stranded RNA binding domain (dsRBD) and double-stranded RNAs (cargos). Functionally, mediates the nuclear export of micro-RNA precursors, which form short hairpins. In Dictyostelium discoideum (Social amoeba), this protein is Exportin-5 (xpo5).